The following is a 324-amino-acid chain: Olfactory receptor 2T2 (324 aa).

Over 1–26 (MGMEGLLQNSTNFVLTGLITHPAFPG) the chain is Extracellular. Asn9 carries an N-linked (GlcNAc...) asparagine glycan. The helical transmembrane segment at 27–50 (LLFAIVFSIFVVAITANLVMILLI) threads the bilayer. Residues 51–58 (HMDSRLHT) are Cytoplasmic-facing. The chain crosses the membrane as a helical span at residues 59–80 (PMYFLLSQLSIMDTIYICITVP). At 81–101 (KMLQDLLSKDKTISFLGCAVQ) the chain is on the extracellular side. Cysteines 98 and 190 form a disulfide. The chain crosses the membrane as a helical span at residues 102–121 (IFLYLTLIGGEFFLLGLMAY). At 122-140 (DRYVAVCNPLRYPLLMNRR) the chain is on the cytoplasmic side. Residues 141-159 (VCLFMVVGSWVGGSLDGFM) traverse the membrane as a helical segment. The Extracellular portion of the chain corresponds to 160–196 (LTPVTMSFPFCRSREINHFFCEIPAVLKLSCTDTSLY). A helical membrane pass occupies residues 197–220 (ETLMYACCVLMLLIPLSVISVSYT). Residues 221–237 (HILLTVHRMNSAEGRRK) lie on the Cytoplasmic side of the membrane. A helical transmembrane segment spans residues 238 to 260 (AFATCSSHIMVVSVFYGAAFYTN). Over 261-273 (VLPHSYHTPEKDK) the chain is Extracellular. Residues 274-293 (VVSAFYTILTPMLNPLIYSL) form a helical membrane-spanning segment. At 294–324 (RNKDVAAALRKVLGRCGSSQSIRVATVIRKG) the chain is on the cytoplasmic side.

Belongs to the G-protein coupled receptor 1 family.

Its subcellular location is the cell membrane. Functionally, odorant receptor. In Homo sapiens (Human), this protein is Olfactory receptor 2T2 (OR2T2).